A 208-amino-acid polypeptide reads, in one-letter code: N-(5'-phosphoribosyl)anthranilate isomerase (208 aa).

It belongs to the TrpF family.

It carries out the reaction N-(5-phospho-beta-D-ribosyl)anthranilate = 1-(2-carboxyphenylamino)-1-deoxy-D-ribulose 5-phosphate. The protein operates within amino-acid biosynthesis; L-tryptophan biosynthesis; L-tryptophan from chorismate: step 3/5. This is N-(5'-phosphoribosyl)anthranilate isomerase from Neisseria meningitidis serogroup C / serotype 2a (strain ATCC 700532 / DSM 15464 / FAM18).